Consider the following 302-residue polypeptide: N-acetyl-D-glucosamine kinase (302 aa).

Residues 4-11 (GFDVGGTK) and 133-140 (GFGGGFIY) each bind ATP. His-157, Cys-177, Cys-179, and Cys-184 together coordinate Zn(2+).

This sequence belongs to the ROK (NagC/XylR) family. NagK subfamily.

The catalysed reaction is N-acetyl-D-glucosamine + ATP = N-acetyl-D-glucosamine 6-phosphate + ADP + H(+). It functions in the pathway cell wall biogenesis; peptidoglycan recycling. In terms of biological role, catalyzes the phosphorylation of N-acetyl-D-glucosamine (GlcNAc) derived from cell-wall degradation, yielding GlcNAc-6-P. The protein is N-acetyl-D-glucosamine kinase of Vibrio parahaemolyticus serotype O3:K6 (strain RIMD 2210633).